Consider the following 125-residue polypeptide: Calcitonin receptor-stimulating peptide 1 (125 aa).

Positions 1–25 are cleaved as a signal peptide; that stretch reads MGFWKFPPFLVLSILVLYQAGMFHA. The propeptide occupies 26 to 77; sequence APFRSVFDGRFDPATLDEEESRLLLAAMVNDYEQMRTRESEKAQKTEGSRIQ. Cys81 and Cys86 form a disulfide bridge.

Belongs to the calcitonin family.

The protein resides in the secreted. Its function is as follows. Stimulates cAMP production via the calcitonin receptor (CT) but not via the CT-like (CL) receptor. This Ovis aries (Sheep) protein is Calcitonin receptor-stimulating peptide 1 (CRSP1).